A 678-amino-acid chain; its full sequence is DNA ligase (678 aa).

Residues 47-51, 96-97, and glutamate 122 contribute to the NAD(+) site; these read DSDYD and SL. Catalysis depends on lysine 124, which acts as the N6-AMP-lysine intermediate. NAD(+) contacts are provided by arginine 145, glutamate 182, lysine 300, and lysine 324. Zn(2+) is bound by residues cysteine 418, cysteine 421, cysteine 436, and cysteine 442. A BRCT domain is found at 602 to 678; it reads AYNESFTGKT…ILEDNLKDLL (77 aa).

The protein belongs to the NAD-dependent DNA ligase family. LigA subfamily. It depends on Mg(2+) as a cofactor. The cofactor is Mn(2+).

The catalysed reaction is NAD(+) + (deoxyribonucleotide)n-3'-hydroxyl + 5'-phospho-(deoxyribonucleotide)m = (deoxyribonucleotide)n+m + AMP + beta-nicotinamide D-nucleotide.. Its function is as follows. DNA ligase that catalyzes the formation of phosphodiester linkages between 5'-phosphoryl and 3'-hydroxyl groups in double-stranded DNA using NAD as a coenzyme and as the energy source for the reaction. It is essential for DNA replication and repair of damaged DNA. In Francisella tularensis subsp. holarctica (strain FTNF002-00 / FTA), this protein is DNA ligase.